Here is a 324-residue protein sequence, read N- to C-terminus: Protein GET4 (324 aa).

The protein belongs to the GET4 family. Interacts with GET3A.

The protein localises to the cytoplasm. It is found in the cytosol. In terms of biological role, involved in the regulation of root hair growth. This is Protein GET4 from Arabidopsis thaliana (Mouse-ear cress).